We begin with the raw amino-acid sequence, 1079 residues long: Carbamoyl phosphate synthase large chain (1079 aa).

The interval 2 to 403 is carboxyphosphate synthetic domain; it reads PKSTDIKSIL…SIQKAIRGLE (402 aa). 12 residues coordinate ATP: Arg129, Arg169, Gly175, Gly176, Glu208, Leu210, Glu215, Gly241, Ile242, His243, Gln285, and Glu299. Residues 133-328 form the ATP-grasp 1 domain; sequence EHSMKKLNLE…IAKIAAKLAI (196 aa). Residues Gln285, Glu299, and Asn301 each contribute to the Mg(2+) site. 3 residues coordinate Mn(2+): Gln285, Glu299, and Asn301. The segment at 404-553 is oligomerization domain; it reads VGASGFDSKI…YSTWEDECES (150 aa). The interval 554-936 is carbamoyl phosphate synthetic domain; sequence HPSKNNKKII…AFSKSMLGAH (383 aa). The 192-residue stretch at 679–870 folds into the ATP-grasp 2 domain; that stretch reads QKTVNKLRLQ…LAKISVRVMC (192 aa). ATP contacts are provided by Arg715, Gln754, Leu756, Glu761, Gly786, Val787, His788, Ser789, Gln829, and Glu841. Residues Gln829, Glu841, and Asn843 each contribute to the Mg(2+) site. Residues Gln829, Glu841, and Asn843 each contribute to the Mn(2+) site. The 143-residue stretch at 937–1079 folds into the MGS-like domain; the sequence is TNMKKSGRVL…KKIQLFYTKK (143 aa). An allosteric domain region spans residues 937-1079; that stretch reads TNMKKSGRVL…KKIQLFYTKK (143 aa).

This sequence belongs to the CarB family. Composed of two chains; the small (or glutamine) chain promotes the hydrolysis of glutamine to ammonia, which is used by the large (or ammonia) chain to synthesize carbamoyl phosphate. Tetramer of heterodimers (alpha,beta)4. Mg(2+) serves as cofactor. Requires Mn(2+) as cofactor.

It carries out the reaction hydrogencarbonate + L-glutamine + 2 ATP + H2O = carbamoyl phosphate + L-glutamate + 2 ADP + phosphate + 2 H(+). The catalysed reaction is hydrogencarbonate + NH4(+) + 2 ATP = carbamoyl phosphate + 2 ADP + phosphate + 2 H(+). The protein operates within amino-acid biosynthesis; L-arginine biosynthesis; carbamoyl phosphate from bicarbonate: step 1/1. It participates in pyrimidine metabolism; UMP biosynthesis via de novo pathway; (S)-dihydroorotate from bicarbonate: step 1/3. In terms of biological role, large subunit of the glutamine-dependent carbamoyl phosphate synthetase (CPSase). CPSase catalyzes the formation of carbamoyl phosphate from the ammonia moiety of glutamine, carbonate, and phosphate donated by ATP, constituting the first step of 2 biosynthetic pathways, one leading to arginine and/or urea and the other to pyrimidine nucleotides. The large subunit (synthetase) binds the substrates ammonia (free or transferred from glutamine from the small subunit), hydrogencarbonate and ATP and carries out an ATP-coupled ligase reaction, activating hydrogencarbonate by forming carboxy phosphate which reacts with ammonia to form carbamoyl phosphate. The polypeptide is Carbamoyl phosphate synthase large chain (Buchnera aphidicola subsp. Acyrthosiphon pisum (strain APS) (Acyrthosiphon pisum symbiotic bacterium)).